We begin with the raw amino-acid sequence, 571 residues long: Urease subunit alpha (571 aa).

In terms of domain architecture, Urease spans 133–571 (GGIDTHIHFV…LPLAQRYFLF (439 aa)). 3 residues coordinate Ni(2+): histidine 138, histidine 140, and lysine 221. Residue lysine 221 is modified to N6-carboxylysine. Histidine 223 contacts substrate. Histidine 250 and histidine 276 together coordinate Ni(2+). Residue histidine 324 is the Proton donor of the active site. Aspartate 364 provides a ligand contact to Ni(2+).

This sequence belongs to the metallo-dependent hydrolases superfamily. Urease alpha subunit family. In terms of assembly, heterotrimer of UreA (gamma), UreB (beta) and UreC (alpha) subunits. Three heterotrimers associate to form the active enzyme. It depends on Ni cation as a cofactor. Carboxylation allows a single lysine to coordinate two nickel ions.

It is found in the cytoplasm. The catalysed reaction is urea + 2 H2O + H(+) = hydrogencarbonate + 2 NH4(+). Its pathway is nitrogen metabolism; urea degradation; CO(2) and NH(3) from urea (urease route): step 1/1. This Anaeromyxobacter sp. (strain K) protein is Urease subunit alpha.